The primary structure comprises 348 residues: Isopentenyl-diphosphate delta-isomerase (348 aa).

9-10 is a substrate binding site; that stretch reads RK. FMN-binding positions include 68 to 70, S98, and N127; that span reads AMT. Q157 lines the substrate pocket. Residue E158 participates in Mg(2+) binding. FMN-binding positions include K188, S213, T218, and 286–287; that span reads AG.

The protein belongs to the IPP isomerase type 2 family. In terms of assembly, homooctamer. Dimer of tetramers. Requires FMN as cofactor. NADPH is required as a cofactor. Mg(2+) serves as cofactor.

The protein resides in the cytoplasm. The catalysed reaction is isopentenyl diphosphate = dimethylallyl diphosphate. Its function is as follows. Involved in the biosynthesis of isoprenoids. Catalyzes the 1,3-allylic rearrangement of the homoallylic substrate isopentenyl (IPP) to its allylic isomer, dimethylallyl diphosphate (DMAPP). This Limosilactobacillus reuteri (strain DSM 20016) (Lactobacillus reuteri) protein is Isopentenyl-diphosphate delta-isomerase.